Consider the following 202-residue polypeptide: Holliday junction branch migration complex subunit RuvA (202 aa).

The domain I stretch occupies residues 1-63; that stretch reads MIAFLSGRVV…EDSLTLFGFA (63 aa). The interval 64-142 is domain II; the sequence is DDDERDTFER…EPGGDTAATP (79 aa). A flexible linker region spans residues 143–152; it reads EQSAAAAPRN. The interval 152–202 is domain III; that stretch reads NWRAQVVSGLVNLGWSTREAEAAADAVAAEAGEQPDVAALLRSALRRLSRA.

This sequence belongs to the RuvA family. In terms of assembly, homotetramer. Forms an RuvA(8)-RuvB(12)-Holliday junction (HJ) complex. HJ DNA is sandwiched between 2 RuvA tetramers; dsDNA enters through RuvA and exits via RuvB. An RuvB hexamer assembles on each DNA strand where it exits the tetramer. Each RuvB hexamer is contacted by two RuvA subunits (via domain III) on 2 adjacent RuvB subunits; this complex drives branch migration. In the full resolvosome a probable DNA-RuvA(4)-RuvB(12)-RuvC(2) complex forms which resolves the HJ.

It localises to the cytoplasm. The RuvA-RuvB-RuvC complex processes Holliday junction (HJ) DNA during genetic recombination and DNA repair, while the RuvA-RuvB complex plays an important role in the rescue of blocked DNA replication forks via replication fork reversal (RFR). RuvA specifically binds to HJ cruciform DNA, conferring on it an open structure. The RuvB hexamer acts as an ATP-dependent pump, pulling dsDNA into and through the RuvAB complex. HJ branch migration allows RuvC to scan DNA until it finds its consensus sequence, where it cleaves and resolves the cruciform DNA. The chain is Holliday junction branch migration complex subunit RuvA from Thermobifida fusca (strain YX).